The sequence spans 494 residues: Neuronal pentraxin receptor (494 aa).

Over 1–2 the chain is Cytoplasmic; it reads MK. Residues 3–23 traverse the membrane as a helical; Signal-anchor for type II membrane protein segment; it reads FLAVLLAAGMLAFLGAVICII. Over 24–494 the chain is Extracellular; that stretch reads ASVPLAASPA…FDVCKRRAKA (471 aa). The segment at 37–80 is disordered; the sequence is PGGTDNASAASAAGAPGPQRSLSALQGAGGSAGPSVLPGEPAAS. Asn-42 carries N-linked (GlcNAc...) asparagine glycosylation. Composition is skewed to low complexity over residues 43-62 and 69-80; these read ASAASAAGAPGPQRSLSALQ and GPSVLPGEPAAS. Asn-211 carries an N-linked (GlcNAc...) asparagine glycan. Residues 286-488 enclose the Pentraxin (PTX) domain; that stretch reads DAFKVSIPIR…GAKKAAFDVC (203 aa). The cysteines at positions 316 and 377 are disulfide-linked. The Ca(2+) site is built by Asn-341, Glu-419, Gln-420, Asp-421, and Gln-431. Asn-457 carries an N-linked (GlcNAc...) asparagine glycan.

As to quaternary structure, interacts with KLHL2. Heteropentamer with NPTX1 and/or NPTX2. Also binds taipoxin-associated calcium-binding protein 49 (TCBP49/RCN2). It depends on Ca(2+) as a cofactor. Post-translationally, N-glycosylated. In terms of processing, ubiquitinated by a cullin-RING-based BCR (BTB-CUL3-RBX1) E3 ubiquitin-protein ligase complex containing KLHL2. As to expression, brain specific.

Its subcellular location is the membrane. Its function is as follows. May be involved in mediating uptake of synaptic material during synapse remodeling or in mediating the synaptic clustering of AMPA glutamate receptors at a subset of excitatory synapses. This chain is Neuronal pentraxin receptor (Nptxr), found in Rattus norvegicus (Rat).